Consider the following 590-residue polypeptide: Aspartate--tRNA(Asp/Asn) ligase (590 aa).

Residue Glu175 coordinates L-aspartate. Positions 199-202 (QQYK) are aspartate. L-aspartate-binding residues include Arg221 and His450. ATP is bound at residue 221–223 (RDE). Glu484 serves as a coordination point for ATP. Arg491 lines the L-aspartate pocket. Residue 536–539 (GVDR) coordinates ATP.

The protein belongs to the class-II aminoacyl-tRNA synthetase family. Type 1 subfamily. Homodimer.

Its subcellular location is the cytoplasm. The catalysed reaction is tRNA(Asx) + L-aspartate + ATP = L-aspartyl-tRNA(Asx) + AMP + diphosphate. In terms of biological role, aspartyl-tRNA synthetase with relaxed tRNA specificity since it is able to aspartylate not only its cognate tRNA(Asp) but also tRNA(Asn). Reaction proceeds in two steps: L-aspartate is first activated by ATP to form Asp-AMP and then transferred to the acceptor end of tRNA(Asp/Asn). The chain is Aspartate--tRNA(Asp/Asn) ligase from Nitrobacter winogradskyi (strain ATCC 25391 / DSM 10237 / CIP 104748 / NCIMB 11846 / Nb-255).